A 163-amino-acid polypeptide reads, in one-letter code: CDP-archaeol synthase (163 aa).

The next 5 helical transmembrane spans lie at 4–24, 52–72, 75–95, 107–127, and 128–148; these read LLLG…APFI, LLLS…FLGI, IIIG…GAFI, APIL…ISFN, and VNLN…LHMF.

It belongs to the CDP-archaeol synthase family. Requires Mg(2+) as cofactor.

It localises to the cell membrane. The catalysed reaction is 2,3-bis-O-(geranylgeranyl)-sn-glycerol 1-phosphate + CTP + H(+) = CDP-2,3-bis-O-(geranylgeranyl)-sn-glycerol + diphosphate. The protein operates within membrane lipid metabolism; glycerophospholipid metabolism. Catalyzes the formation of CDP-2,3-bis-(O-geranylgeranyl)-sn-glycerol (CDP-archaeol) from 2,3-bis-(O-geranylgeranyl)-sn-glycerol 1-phosphate (DGGGP) and CTP. This reaction is the third ether-bond-formation step in the biosynthesis of archaeal membrane lipids. The protein is CDP-archaeol synthase of Sulfolobus acidocaldarius (strain ATCC 33909 / DSM 639 / JCM 8929 / NBRC 15157 / NCIMB 11770).